Consider the following 291-residue polypeptide: DNA N6-methyl adenine demethylase (291 aa).

The region spanning 85–256 (GLTLIHNFLS…RGRRIALTMR (172 aa)) is the Fe2OG dioxygenase domain. Residue 171 to 173 (LEY) coordinates 2-oxoglutarate. Fe cation is bound by residues His184, Asp186, and His239.

The protein belongs to the alkB family. As to quaternary structure, interacts with top-2; the interaction is required for localization of top-2 to DNA. Also interacts with mtss-1, his-24, ule-3, C18B2.3, pgl-1, ceh-93, mcm-4 and F37C4.5. Fe(2+) is required as a cofactor.

The protein localises to the nucleus. The enzyme catalyses an N(6)-methyl-2'-deoxyadenosine in DNA + 2-oxoglutarate + O2 = a 2'-deoxyadenosine in DNA + formaldehyde + succinate + CO2. Functionally, dioxygenase that specifically demethylates DNA methylated on the 6th position of adenine (N(6)-methyladenosine) DNA. N(6)-methyladenosine (m6A) DNA is involved in epigenetic transgenerational inheritance. Plays an essential role in DNA replication and repair in the germline during meiosis. Binds to components of the DNA replication machinery such as top-2, and directs their localization to DNA to control DNA replication. This is DNA N6-methyl adenine demethylase from Caenorhabditis elegans.